The primary structure comprises 722 residues: Probable glycerol-3-phosphate dehydrogenase, mitochondrial (722 aa).

The N-terminal 43 residues, 1–43 (MSWVRFTKTGVAVVATSAAAVLALDMTNERRFQRQVKDHFRTV), are a transit peptide targeting the mitochondrion. 76–104 (DVLIIGGGATGAGVALDAQTRGLKTALVE) lines the FAD pocket. EF-hand domains follow at residues 624–659 (EEMQRAKERFQQLDKDRKGHITVNDLRKHFREHNQK) and 660–695 (IDERVLHELLNEVDLNKNGEIEIAEFFQLYSGLKGG). Ca(2+) is bound by residues aspartate 673, asparagine 675, asparagine 677, glutamate 679, and glutamate 684.

The protein belongs to the FAD-dependent glycerol-3-phosphate dehydrogenase family. It depends on FAD as a cofactor.

The protein localises to the mitochondrion. It carries out the reaction a quinone + sn-glycerol 3-phosphate = dihydroxyacetone phosphate + a quinol. The protein operates within polyol metabolism; glycerol degradation via glycerol kinase pathway; glycerone phosphate from sn-glycerol 3-phosphate (anaerobic route): step 1/1. Calcium-binding enhances the activity of the enzyme. The chain is Probable glycerol-3-phosphate dehydrogenase, mitochondrial from Caenorhabditis elegans.